A 362-amino-acid chain; its full sequence is G-protein coupled receptor 4 (362 aa).

The Extracellular portion of the chain corresponds to M1–G8. N3 is a glycosylation site (N-linked (GlcNAc...) asparagine). The helical transmembrane segment at C9–Q45 threads the bilayer. 2 disulfide bridges follow: C9-C258 and C90-C168. At V46–R49 the chain is on the cytoplasmic side. A helical transmembrane segment spans residues N50–H80. The Extracellular segment spans residues D81–H85. The chain crosses the membrane as a helical span at residues G86–H121. At P122 to R129 the chain is on the cytoplasmic side. A helical transmembrane segment spans residues R130–D156. The Extracellular portion of the chain corresponds to E157–F172. The extracellular loop 2 (ECL2) stretch occupies residues E157 to F172. An N-linked (GlcNAc...) asparagine glycan is attached at N164. A helical membrane pass occupies residues P173 to G210. Residues S211 to T214 are Cytoplasmic-facing. The helical transmembrane segment at E215–V250 threads the bilayer. Over Y251 to F260 the chain is Extracellular. The chain crosses the membrane as a helical span at residues E261–V289. Topologically, residues N290–Q362 are cytoplasmic.

It belongs to the G-protein coupled receptor 1 family.

It is found in the cell membrane. With respect to regulation, activated by a network of residues that connects an extracellular-facing cavity to Glu-145, a conserved charged residue buried in the transmembrane core of the receptor. Protonation likely drives conformational changes in extracellular loop 2 (ECL2), which stabilizes movement of transmembrane 3 (TM3) and a series of rearrangements that connect the extracellular-facing cavity to Glu-145, a residue only conserved in proton-sensing G-protein coupled receptors. Its function is as follows. Proton-sensing G-protein coupled receptor activated by extracellular pH, which is required to monitor pH changes and generate adaptive reactions. Activated by an optimal pH of 6.8-7.2. Ligand binding causes a conformation change that triggers signaling via guanine nucleotide-binding proteins (G proteins) and modulates the activity of downstream effectors, such as adenylate cyclase. GPR4 is mainly coupled to G(s) G proteins and mediates activation of adenylate cyclase activity. May also couple with G(q) and G(12)/G(13) G proteins. Acts as a key regulator of respiratory sensitivity to CO2/H(+) in brain retrotrapezoid nucleus neurons: acts by mediating detection of protons generated by the formation of carbonic acid in the blood, an important mechanism to impulse to breathe. Also acts as a regulator of acid secretion in the kidney collecting duct by maintaining acid-base homeostasis in the kidney. Acidosis-induced GPR4 activation increases paracellular gap formation and permeability of vascular endothelial cells, possibly through the G(12)/G(13)/Rho GTPase signaling pathway. In Bos taurus (Bovine), this protein is G-protein coupled receptor 4 (GPR4).